The sequence spans 555 residues: Connector enhancer of kinase suppressor of ras 3 (555 aa).

In terms of domain architecture, SAM spans 7–72 (WSPKQVVDWT…LEAVDLLCAL (66 aa)). Residues 80–174 (NMKNLVLKLR…TTVQKDCFVA (95 aa)) form the CRIC domain. The PDZ domain maps to 211 to 293 (EVHLPNIKPG…GVVLLLKKRP (83 aa)). Disordered stretches follow at residues 309–334 (WKPP…DTSL), 347–390 (PPPP…FLDQ), and 517–537 (IPFQ…KSSS). One can recognise a DUF1170 domain in the interval 325–546 (SPESTMDTSL…STEPSLLVSW (222 aa)). Phosphoserine occurs at positions 381 and 383.

This sequence belongs to the CNKSR family. In terms of assembly, interacts with epithelial sodium channel ENaC. Interacts directly with SCNN1A (ENaC subunit alpha) and SCNN1B (ENaC subunit beta) C-terminal tails. Interacts with ENaC regulatory proteins NEDD4L, RAF1 and SGK1.

It is found in the cytoplasm. It localises to the apical cell membrane. Functionally, involved in transepithelial sodium transport. Regulates aldosterone-induced and epithelial sodium channel (ENaC)-mediated sodium transport through regulation of ENaC cell surface expression. Acts as a scaffold protein coordinating the assembly of an ENaC-regulatory complex (ERC). This Homo sapiens (Human) protein is Connector enhancer of kinase suppressor of ras 3 (CNKSR3).